Reading from the N-terminus, the 519-residue chain is Cytosol aminopeptidase (519 aa).

At serine 42 the chain carries Phosphoserine. Residue lysine 45 is modified to N6-succinyllysine. A Phosphoserine modification is found at serine 54. N6-succinyllysine occurs at positions 61 and 103. Serine 180 and serine 194 each carry phosphoserine. Positions 202, 203, and 205 each coordinate Zn(2+). Lysine 221 bears the N6-acetyllysine; alternate mark. Lysine 221 carries the post-translational modification N6-succinyllysine; alternate. Serine 238 bears the Phosphoserine mark. Zn(2+) is bound by residues lysine 282 and aspartate 287. 4 residues coordinate substrate: lysine 282, aspartate 287, serine 292, and lysine 294. Aspartate 287 is a binding site for Mg(2+). Lysine 294 is a catalytic residue. Zn(2+)-binding residues include arginine 303, aspartate 305, aspartate 364, and glutamate 366. Residues aspartate 305 and aspartate 364 each coordinate substrate. Mg(2+) is bound by residues aspartate 364 and glutamate 366. Residue arginine 368 is part of the active site. Lysine 455 is modified (N6-acetyllysine; alternate). Lysine 455 is subject to N6-succinyllysine; alternate. Lysine 476 bears the N6-succinyllysine mark. Lysine 489 carries the post-translational modification N6-acetyllysine; alternate. Residue lysine 489 is modified to N6-succinyllysine; alternate.

This sequence belongs to the peptidase M17 family. In terms of assembly, homohexamer. It depends on Zn(2+) as a cofactor. The cofactor is Mn(2+).

The protein localises to the cytoplasm. The enzyme catalyses Release of an N-terminal amino acid, Xaa-|-Yaa-, in which Xaa is preferably Leu, but may be other amino acids including Pro although not Arg or Lys, and Yaa may be Pro. Amino acid amides and methyl esters are also readily hydrolyzed, but rates on arylamides are exceedingly low.. The catalysed reaction is an S-substituted L-cysteinylglycine + H2O = an S-substituted L-cysteine + glycine. It carries out the reaction L-cysteinylglycine + H2O = L-cysteine + glycine. It catalyses the reaction S-benzyl-L-cysteinylglycine + H2O = S-benzyl-L-cysteine + glycine. The enzyme catalyses Release of N-terminal proline from a peptide.. Its function is as follows. Cytosolic metallopeptidase that catalyzes the removal of unsubstituted N-terminal hydrophobic amino acids from various peptides. The presence of Zn(2+) ions is essential for the peptidase activity, and the association with other cofactors can modulate the substrate spectificity of the enzyme. For instance, in the presence of Mn(2+), it displays a specific Cys-Gly hydrolyzing activity of Cys-Gly-S-conjugates. Involved in the metabolism of glutathione and in the degradation of glutathione S-conjugates, which may play a role in the control of the cell redox status. In Homo sapiens (Human), this protein is Cytosol aminopeptidase.